Reading from the N-terminus, the 173-residue chain is RNA 2',3'-cyclic phosphodiesterase (173 aa).

His38 functions as the Proton donor in the catalytic mechanism. 2 short sequence motifs (HXTX) span residues 38–41 and 118–121; these read HITV and HLTI. The active-site Proton acceptor is His118.

It belongs to the 2H phosphoesterase superfamily. ThpR family.

It catalyses the reaction a 3'-end 2',3'-cyclophospho-ribonucleotide-RNA + H2O = a 3'-end 2'-phospho-ribonucleotide-RNA + H(+). In terms of biological role, hydrolyzes RNA 2',3'-cyclic phosphodiester to an RNA 2'-phosphomonoester. This Methanocaldococcus jannaschii (strain ATCC 43067 / DSM 2661 / JAL-1 / JCM 10045 / NBRC 100440) (Methanococcus jannaschii) protein is RNA 2',3'-cyclic phosphodiesterase.